A 161-amino-acid chain; its full sequence is Putative acetyltransferase SAV0762 (161 aa).

It belongs to the transferase hexapeptide repeat family.

This chain is Putative acetyltransferase SAV0762, found in Staphylococcus aureus (strain Mu50 / ATCC 700699).